The chain runs to 327 residues: MGRNSQGFLTTIRIIVTSATDQPSNFIHSLSNKRESTMRQIAFYGKGGIGKSTTSQNTIAALAETNRIMIVGCDPKADSTRLMLHTKAQTTILHLAAERGTVEDIELEEVLLEGYQGVKCVESGGPEPGVGCAGRGIITAINFLEEEGAYEDLDFVSYDVLGDVVCGGFAMPIREGKAQEIYIVTSGEMMAMYAANNIARGILKYAHTGGVRLGGLICNSRNVNCEAELIEELARRLGTQMIHFVPRSKQVQEAELRRMTVIEYSPDHPQAQEYRELSRKIENNTNLVIPTPITMEELEELLVDFGILGGEDEYEKALQADKAATKA.

A PEST-like; not found in other NifH region spans residues 1 to 37 (MGRNSQGFLTTIRIIVTSATDQPSNFIHSLSNKREST). 45–52 (GKGGIGKS) contributes to the ATP binding site. Residue Cys132 participates in [4Fe-4S] cluster binding. ADP-ribosylarginine; by dinitrogenase reductase ADP-ribosyltransferase is present on Arg135. Residue Cys166 coordinates [4Fe-4S] cluster.

The protein belongs to the NifH/BchL/ChlL family. In terms of assembly, homodimer. It depends on [4Fe-4S] cluster as a cofactor. Post-translationally, the reversible ADP-ribosylation of Arg-135 inactivates the nitrogenase reductase and regulates nitrogenase activity.

The catalysed reaction is N2 + 8 reduced [2Fe-2S]-[ferredoxin] + 16 ATP + 16 H2O = H2 + 8 oxidized [2Fe-2S]-[ferredoxin] + 2 NH4(+) + 16 ADP + 16 phosphate + 6 H(+). Its function is as follows. The key enzymatic reactions in nitrogen fixation are catalyzed by the nitrogenase complex, which has 2 components: the iron protein and the molybdenum-iron protein. The protein is Nitrogenase iron protein (nifH) of Crocosphaera subtropica (strain ATCC 51142 / BH68) (Cyanothece sp. (strain ATCC 51142)).